Reading from the N-terminus, the 378-residue chain is Spermidine/putrescine import ATP-binding protein PotA (378 aa).

Residues 18–248 (VQLAGIRKCF…PKNLFVAGFI (231 aa)) enclose the ABC transporter domain. An ATP-binding site is contributed by 50 to 57 (GPSGCGKT).

Belongs to the ABC transporter superfamily. Spermidine/putrescine importer (TC 3.A.1.11.1) family. As to quaternary structure, the complex is composed of two ATP-binding proteins (PotA), two transmembrane proteins (PotB and PotC) and a solute-binding protein (PotD).

The protein resides in the cell inner membrane. The catalysed reaction is ATP + H2O + polyamine-[polyamine-binding protein]Side 1 = ADP + phosphate + polyamineSide 2 + [polyamine-binding protein]Side 1.. In terms of biological role, part of the ABC transporter complex PotABCD involved in spermidine/putrescine import. Responsible for energy coupling to the transport system. This chain is Spermidine/putrescine import ATP-binding protein PotA, found in Shigella flexneri.